Consider the following 497-residue polypeptide: Intermediate filament protein A (497 aa).

The tract at residues 1–32 (MSDLNDRLASYIEKVRFLEAQNRKLAADLDLL) is coil 1A. Residues 1–342 (MSDLNDRLAS…KMLEGEENRA (342 aa)) enclose the IF rod domain. The segment at 33 to 46 (RGRWGKDTLSVRAM) is linker 1. The coil 1B stretch occupies residues 47-184 (YEGELQEARK…RVHDQEIAEL (138 aa)). The linker 12 stretch occupies residues 185 to 202 (QAMASRDTTPENREYFKN). Residues 203 to 342 (ELASAIRDIR…KMLEGEENRA (140 aa)) are coil 2. Positions 343-497 (GLRQLVEQVV…THIQRSSHTI (155 aa)) are tail. An LTD domain is found at 375-493 (SRTSFQRSAK…EERATHIQRS (119 aa)).

Belongs to the intermediate filament family. In terms of assembly, a and B can form homopolymers. Giant body muscle cells.

The protein localises to the cytoplasm. The protein is Intermediate filament protein A of Ascaris suum (Pig roundworm).